A 410-amino-acid polypeptide reads, in one-letter code: Elongation factor Tu, chloroplastic (410 aa).

Residues 10–213 (KPHLNIGTIG…TVDEYIPTPK (204 aa)) enclose the tr-type G domain. A G1 region spans residues 19–26 (GHVDHGKT). A GTP-binding site is contributed by 19-26 (GHVDHGKT). T26 provides a ligand contact to Mg(2+). The segment at 60-64 (GITIN) is G2. The interval 81–84 (DCPG) is G3. Residues 81 to 85 (DCPGH) and 136 to 139 (NKAD) each bind GTP. A G4 region spans residues 136-139 (NKAD). Residues 174–176 (SAI) form a G5 region.

This sequence belongs to the TRAFAC class translation factor GTPase superfamily. Classic translation factor GTPase family. EF-Tu/EF-1A subfamily.

The protein resides in the plastid. It is found in the chloroplast. The enzyme catalyses GTP + H2O = GDP + phosphate + H(+). Functionally, GTP hydrolase that promotes the GTP-dependent binding of aminoacyl-tRNA to the A-site of ribosomes during protein biosynthesis. The polypeptide is Elongation factor Tu, chloroplastic (tufA) (Codium fragile (Dead man's fingers)).